Reading from the N-terminus, the 285-residue chain is Putative ankyrin repeat protein R551 (285 aa).

ANK repeat units follow at residues 99–129 (DLKS…PIKI), 157–186 (NDFD…LQDE), 188–214 (IGKI…EAFR), and 215–249 (SAPD…CIQQ).

The sequence is that of Putative ankyrin repeat protein R551 from Acanthamoeba polyphaga (Amoeba).